We begin with the raw amino-acid sequence, 181 residues long: Lysozyme B (181 aa).

The first 19 residues, 1 to 19 (MRISFFLLILAVIIGYAYG), serve as a signal peptide directing secretion. The propeptide occupies 139 to 181 (LTDSRPLGPFNVTEEEKAQLFIDHEIAMAQCEAEKTCNGFDLE).

It belongs to the dictyostelium lysozyme family. Post-translationally, contains six disulfide bonds.

The protein resides in the cytoplasmic vesicle lumen. It carries out the reaction Hydrolysis of (1-&gt;4)-beta-linkages between N-acetylmuramic acid and N-acetyl-D-glucosamine residues in a peptidoglycan and between N-acetyl-D-glucosamine residues in chitodextrins.. In terms of biological role, has antibacterial activity. The chain is Lysozyme B (alyB) from Dictyostelium discoideum (Social amoeba).